A 371-amino-acid polypeptide reads, in one-letter code: uncharacterized protein (371 aa).

ATP is bound at residue 33–40; sequence GPLNSGKT.

It belongs to the archaeal ATPase family.

This is an uncharacterized protein from Methanocaldococcus jannaschii (strain ATCC 43067 / DSM 2661 / JAL-1 / JCM 10045 / NBRC 100440) (Methanococcus jannaschii).